The chain runs to 60 residues: Large ribosomal subunit protein bL32 (60 aa).

Residues 1-23 (MAVPKRKKSKSRRNMHRSHHAIK) form a disordered region.

This sequence belongs to the bacterial ribosomal protein bL32 family.

The polypeptide is Large ribosomal subunit protein bL32 (Wolbachia pipientis subsp. Culex pipiens (strain wPip)).